A 239-amino-acid chain; its full sequence is dITP/XTP pyrophosphatase (239 aa).

Residue 7 to 12 participates in substrate binding; sequence THNEGK. D74 functions as the Proton acceptor in the catalytic mechanism. D74 contacts Mg(2+). Substrate is bound by residues S75, 182-185, K214, and 219-220; these read FGYD and HR.

It belongs to the HAM1 NTPase family. In terms of assembly, homodimer. It depends on Mg(2+) as a cofactor.

The catalysed reaction is XTP + H2O = XMP + diphosphate + H(+). It catalyses the reaction dITP + H2O = dIMP + diphosphate + H(+). It carries out the reaction ITP + H2O = IMP + diphosphate + H(+). Its function is as follows. Pyrophosphatase that catalyzes the hydrolysis of nucleoside triphosphates to their monophosphate derivatives, with a high preference for the non-canonical purine nucleotides XTP (xanthosine triphosphate), dITP (deoxyinosine triphosphate) and ITP. Seems to function as a house-cleaning enzyme that removes non-canonical purine nucleotides from the nucleotide pool, thus preventing their incorporation into DNA/RNA and avoiding chromosomal lesions. The chain is dITP/XTP pyrophosphatase from Bifidobacterium animalis subsp. lactis (strain AD011).